A 451-amino-acid polypeptide reads, in one-letter code: Phosphoglucosamine mutase (451 aa).

S101 serves as the catalytic Phosphoserine intermediate. Residues S101, D240, D242, and D244 each coordinate Mg(2+). Position 101 is a phosphoserine (S101).

This sequence belongs to the phosphohexose mutase family. It depends on Mg(2+) as a cofactor. Post-translationally, activated by phosphorylation.

The enzyme catalyses alpha-D-glucosamine 1-phosphate = D-glucosamine 6-phosphate. In terms of biological role, catalyzes the conversion of glucosamine-6-phosphate to glucosamine-1-phosphate. The sequence is that of Phosphoglucosamine mutase from Streptococcus pyogenes serotype M3 (strain SSI-1).